Here is a 100-residue protein sequence, read N- to C-terminus: Putative septation protein SpoVG (100 aa).

Belongs to the SpoVG family.

Could be involved in septation. The chain is Putative septation protein SpoVG from Staphylococcus aureus (strain JH1).